A 448-amino-acid chain; its full sequence is Asparagine--tRNA ligase (448 aa).

Belongs to the class-II aminoacyl-tRNA synthetase family. Homodimer.

It is found in the cytoplasm. The enzyme catalyses tRNA(Asn) + L-asparagine + ATP = L-asparaginyl-tRNA(Asn) + AMP + diphosphate + H(+). This chain is Asparagine--tRNA ligase, found in Streptococcus sanguinis (strain SK36).